A 180-amino-acid polypeptide reads, in one-letter code: Probable phospholipid hydroperoxide glutathione peroxidase (180 aa).

Residue Cys54 is part of the active site.

This sequence belongs to the glutathione peroxidase family.

The protein resides in the cytoplasm. It catalyses the reaction a hydroperoxy polyunsaturated fatty acid + 2 glutathione = a hydroxy polyunsaturated fatty acid + glutathione disulfide + H2O. Functionally, protects cells and enzymes from oxidative damage, by catalyzing the reduction of hydrogen peroxide, lipid peroxides and organic hydroperoxide, by glutathione. This Helianthus annuus (Common sunflower) protein is Probable phospholipid hydroperoxide glutathione peroxidase (GPXHA-2).